The following is a 113-amino-acid chain: Cell cycle protein GpsB (113 aa).

The stretch at 36 to 68 (LDMVIKDYSTFTQEIEALQAENIRLVQELDNAP) forms a coiled coil.

It belongs to the GpsB family. In terms of assembly, forms polymers through the coiled coil domains. Interacts with PBP1, MreC and EzrA.

It localises to the cytoplasm. Its function is as follows. Divisome component that associates with the complex late in its assembly, after the Z-ring is formed, and is dependent on DivIC and PBP2B for its recruitment to the divisome. Together with EzrA, is a key component of the system that regulates PBP1 localization during cell cycle progression. Its main role could be the removal of PBP1 from the cell pole after pole maturation is completed. Also contributes to the recruitment of PBP1 to the division complex. Not essential for septum formation. This Listeria innocua serovar 6a (strain ATCC BAA-680 / CLIP 11262) protein is Cell cycle protein GpsB.